Here is a 90-residue protein sequence, read N- to C-terminus: Small ribosomal subunit protein bS16 (90 aa).

This sequence belongs to the bacterial ribosomal protein bS16 family.

The chain is Small ribosomal subunit protein bS16 from Geobacillus sp. (strain WCH70).